The primary structure comprises 192 residues: Iron sulfur cluster assembly protein 1, mitochondrial (192 aa).

The transit peptide at 1–53 (MSVFRRSVQCVGVLPSILAQRSSLLARPANLQFLKTNSSKFVPQVTANVSRRM) directs the protein to the mitochondrion.

This sequence belongs to the NifU family. In terms of assembly, homodimer. Component of the core Fe-S cluster (ISC) assembly machinery. It depends on [2Fe-2S] cluster as a cofactor.

Its subcellular location is the mitochondrion. It localises to the mitochondrion matrix. It participates in cofactor biosynthesis; iron-sulfur cluster biosynthesis. Functionally, scaffold protein for the de novo synthesis of iron-sulfur (Fe-S) clusters within mitochondria, which is required for maturation of both mitochondrial and cytoplasmic [2Fe-2S] and [4Fe-4S] proteins. First, a [2Fe-2S] cluster is transiently assembled on the scaffold protein isu1. In a second step, the cluster is released from isu1, transferred to a glutaredoxin, followed by the formation of mitochondrial [2Fe-2S] proteins, the synthesis of [4Fe-4S] clusters and their target-specific insertion into the recipient apoproteins. Cluster assembly on isu1 depends on the function of the cysteine desulfurase complex nfs1-isd11, which serves as the sulfur donor for cluster synthesis, the iron-binding protein frataxin as the putative iron donor, and the electron transfer chain comprised of ferredoxin reductase and ferredoxin, which receive their electrons from NADH. The sequence is that of Iron sulfur cluster assembly protein 1, mitochondrial (isu1) from Schizosaccharomyces pombe (strain 972 / ATCC 24843) (Fission yeast).